The chain runs to 356 residues: Homoserine O-acetyltransferase (356 aa).

The AB hydrolase-1 domain maps to 49–337; that stretch reads VLICHALTGS…KSTHGHDAFL (289 aa). S143 serves as the catalytic Nucleophile. R212 contacts substrate. Catalysis depends on residues D304 and H333. Substrate is bound at residue D334.

It belongs to the AB hydrolase superfamily. MetX family. Homodimer.

The protein resides in the cytoplasm. It catalyses the reaction L-homoserine + acetyl-CoA = O-acetyl-L-homoserine + CoA. It participates in amino-acid biosynthesis; L-methionine biosynthesis via de novo pathway; O-acetyl-L-homoserine from L-homoserine: step 1/1. Functionally, transfers an acetyl group from acetyl-CoA to L-homoserine, forming acetyl-L-homoserine. In Nostoc punctiforme (strain ATCC 29133 / PCC 73102), this protein is Homoserine O-acetyltransferase.